Here is a 751-residue protein sequence, read N- to C-terminus: Serine/threonine-protein kinase B-raf (751 aa).

The segment covering 1-32 (MAALSGGGGSSSGGGGGGGGGGGGGDGGGGAE) has biased composition (gly residues). Residues 1-55 (MAALSGGGGSSSGGGGGGGGGGGGGDGGGGAEQGQALFNGDMEPEAGAGAAASSA) are disordered. Alanine 2 carries the N-acetylalanine modification. The segment covering 46–55 (AGAGAAASSA) has biased composition (low complexity). Residue serine 135 is modified to Phosphoserine. Residues 139-211 (PIVRVFLPNK…TGEELHVEVL (73 aa)) enclose the RBD domain. Residues histidine 219, cysteine 232, cysteine 235, cysteine 245, cysteine 248, histidine 253, cysteine 256, and cysteine 264 each contribute to the Zn(2+) site. The segment at 288 to 440 (EASFPETALP…SSDDWEIPDG (153 aa)) is disordered. Positions 297-324 (PSGSSSAPPSDSTGPQILTSPSPSKSIP) are enriched in low complexity. The residue at position 316 (serine 316) is a Phosphoserine. Residues 331 to 346 (PADEDHRNQFGQRDRS) are compositionally biased toward basic and acidic residues. Phosphoserine is present on serine 348. Threonine 356 carries the phosphothreonine; by autocatalysis modification. Threonine 379 carries the phosphothreonine modification. Position 382 is a phosphoserine (serine 382). Phosphothreonine is present on threonine 384. The span at 406 to 432 (QRERKSSSSSSSEDRSRMKTLGRRDSS) shows a compositional bias: basic and acidic residues. Phosphoserine is present on residues serine 431 and serine 432. One can recognise a Protein kinase domain in the interval 442 to 702 (ITVGQRIGSG…PQILASIELL (261 aa)). ATP is bound by residues 448-456 (IGSGSFGTV) and lysine 468. Aspartate 561 serves as the catalytic Proton acceptor. A Glycyl lysine isopeptide (Lys-Gly) (interchain with G-Cter in ubiquitin) cross-link involves residue lysine 563. Arginine 656 bears the Omega-N-methylarginine; by PRMT5 mark. A phosphoserine mark is found at serine 714 and serine 735. Residue threonine 738 is modified to Phosphothreonine; by MAPK1.

It belongs to the protein kinase superfamily. TKL Ser/Thr protein kinase family. RAF subfamily. In terms of assembly, monomer. Homodimer. Heterodimerizes with RAF1, and the heterodimer possesses a highly increased kinase activity compared to the respective homodimers or monomers. Heterodimerization is mitogen-regulated and enhanced by 14-3-3 proteins. MAPK1/ERK2 activation can induce a negative feedback that promotes the dissociation of the heterodimer by phosphorylating BRAF at Thr-738. Heterodimerizes (via N-terminus) with KSR1 (via N-terminus) or KSR2 (via N-terminus) in a MAP2K1-dependent manner. Interacts with MAP2K1 and MAP2K2. Found in a complex with at least BRAF, HRAS, MAP2K1, MAPK3 and RGS14. Interacts with RIT1. Interacts (via N-terminus) with RGS14 (via RBD domains); the interaction mediates the formation of a ternary complex with RAF1, a ternary complex inhibited by GNAI1. Interacts with DGKH. Interacts with PRMT5. Interacts with AKAP13, MAP2K1 and KSR1. Identified in a complex with AKAP13, KSR1 and MAP2K1. Interacts with FNIP1 and FNIP2. The cofactor is Zn(2+). Phosphorylation at Ser-348 by SGK1 inhibits its activity. Dephosphorylation of Ser-348 by the SHOC2-MRAS-PP1c (SMP) complex consisting of SHOC2, GTP-bound M-Ras/MRAS and the catalytic subunit of protein phosphatase 1 (PPP1CA, PPP1CB or PPP1CC); this relieves inactivation and stimulates kinase activity. Post-translationally, methylation by PRMT5 decreases stability and kinase activity. In terms of processing, ubiquitinated by RNF149; which leads to proteasomal degradation. Polyubiquitinated at Lys-615 in response to EGF.

It localises to the nucleus. The protein localises to the cytoplasm. Its subcellular location is the cell membrane. The catalysed reaction is L-seryl-[protein] + ATP = O-phospho-L-seryl-[protein] + ADP + H(+). It catalyses the reaction L-threonyl-[protein] + ATP = O-phospho-L-threonyl-[protein] + ADP + H(+). In quiescent cells, maintained in an inactive state via an intramolecular interaction between the protein kinase and N-terminal domains. Following mitogen-mediated cell activation, binds via its RGB domain to active HRAS (GTP-bound) which releases the inhibitory intramolecular interaction between the two domains. This allows the MAP2K1-mediated dimerization of KSR1 or KSR2, and BRAF which activates BRAF. In terms of biological role, involved in the transduction of mitogenic signals from the cell membrane to the nucleus. Phosphorylates MAP2K1, and thereby activates the MAP kinase signal transduction pathway. Phosphorylates PFKFB2. May play a role in the postsynaptic responses of hippocampal neurons. The polypeptide is Serine/threonine-protein kinase B-raf (Mus musculus (Mouse)).